Here is a 943-residue protein sequence, read N- to C-terminus: UvrABC system protein A (943 aa).

31–38 (GLSGSGKS) serves as a coordination point for ATP. The C4-type zinc-finger motif lies at 253–280 (CPHCGYSVPELEPRLFSFNNPAGACPTC). ABC transporter domains are found at residues 310–587 (WDRR…PHSI) and 607–937 (LDKK…RFLK). 640–647 (GVSGSGKS) is a binding site for ATP. The C4-type zinc finger occupies 740–766 (CEACQGDGVIKVEMHFLPDVYVPCEQC).

This sequence belongs to the ABC transporter superfamily. UvrA family. As to quaternary structure, forms a heterotetramer with UvrB during the search for lesions.

It is found in the cytoplasm. In terms of biological role, the UvrABC repair system catalyzes the recognition and processing of DNA lesions. UvrA is an ATPase and a DNA-binding protein. A damage recognition complex composed of 2 UvrA and 2 UvrB subunits scans DNA for abnormalities. When the presence of a lesion has been verified by UvrB, the UvrA molecules dissociate. This is UvrABC system protein A from Pasteurella multocida (strain Pm70).